Consider the following 302-residue polypeptide: tRNA pseudouridine synthase B (302 aa).

The active-site Nucleophile is Asp-40.

The protein belongs to the pseudouridine synthase TruB family. Type 1 subfamily.

It carries out the reaction uridine(55) in tRNA = pseudouridine(55) in tRNA. Its function is as follows. Responsible for synthesis of pseudouridine from uracil-55 in the psi GC loop of transfer RNAs. The polypeptide is tRNA pseudouridine synthase B (Shouchella clausii (strain KSM-K16) (Alkalihalobacillus clausii)).